Here is a 98-residue protein sequence, read N- to C-terminus: Co-chaperonin GroES (98 aa).

Belongs to the GroES chaperonin family. As to quaternary structure, heptamer of 7 subunits arranged in a ring. Interacts with the chaperonin GroEL.

It localises to the cytoplasm. In terms of biological role, together with the chaperonin GroEL, plays an essential role in assisting protein folding. The GroEL-GroES system forms a nano-cage that allows encapsulation of the non-native substrate proteins and provides a physical environment optimized to promote and accelerate protein folding. GroES binds to the apical surface of the GroEL ring, thereby capping the opening of the GroEL channel. This chain is Co-chaperonin GroES, found in Paenarthrobacter aurescens (strain TC1).